We begin with the raw amino-acid sequence, 1025 residues long: Putative calcium-transporting ATPase 11, plasma membrane-type (1025 aa).

Residues 1–157 are Cytoplasmic-facing; sequence MSNLLKDFEV…NRYTEKPARS (157 aa). An interaction with calmodulin region spans residues 19 to 30; that stretch reads ARQRWRSSVGLV. The helical transmembrane segment at 158-178 threads the bilayer; the sequence is FLTFVWEALQDITLIILMVCA. The Lumenal segment spans residues 179–196; the sequence is VVSIGVGVATEGFPKGMY. The chain crosses the membrane as a helical span at residues 197 to 217; sequence DGTGILLSIILVVMVTAISDY. At 218–345 the chain is on the cytoplasmic side; the sequence is KQSLQFRDLD…EDETPLQVKL (128 aa). The helical transmembrane segment at 346-365 threads the bilayer; it reads NGVATIIGKIGLGFAVLTFV. Residues 366-395 are Lumenal-facing; the sequence is VLCIRFVVEKATAGSITEWSSEDALTLLDY. Residues 396-413 form a helical membrane-spanning segment; that stretch reads FAIAVTIIVVAVPEGLPL. Over 414-801 the chain is Cytoplasmic; that stretch reads AVTLSLAFAM…KWGRAVYINI (388 aa). Asp451 (4-aspartylphosphate intermediate) is an active-site residue. Mg(2+)-binding residues include Asp746 and Asp750. Residues 802 to 820 form a helical membrane-spanning segment; that stretch reads QKFVQFQLTVNVVALIINF. Residues 821–831 are Lumenal-facing; that stretch reads VSACITGSAPL. Residues 832 to 852 traverse the membrane as a helical segment; the sequence is TAVQLLWVNMIMDTLGALALA. Residues 853 to 872 lie on the Cytoplasmic side of the membrane; that stretch reads TEPPNEGLMKRQPIGRTASF. The chain crosses the membrane as a helical span at residues 873 to 895; it reads ITRAMWRNIIGQSIYQLIVLGIL. Residues 896 to 907 lie on the Lumenal side of the membrane; it reads NFAGKQILNLNG. Residues 908–929 form a helical membrane-spanning segment; it reads PDSTIVLNTIIFNSFVFCQVFN. Over 930-947 the chain is Cytoplasmic; the sequence is EVNSREIEKINVFEGMFK. The helical transmembrane segment at 948–969 threads the bilayer; that stretch reads SWVFVAVMTATVGFQVIIVEFL. Residues 970 to 979 are Lumenal-facing; the sequence is GAFASTVPLS. The helical transmembrane segment at 980–1001 threads the bilayer; the sequence is WQHWLLCILIGSVSMILAVGLK. At 1002-1025 the chain is on the cytoplasmic side; that stretch reads CIPVESNRHHDGYELLPSGPSDSA.

This sequence belongs to the cation transport ATPase (P-type) (TC 3.A.3) family. Type IIB subfamily.

The protein resides in the membrane. It catalyses the reaction Ca(2+)(in) + ATP + H2O = Ca(2+)(out) + ADP + phosphate + H(+). With respect to regulation, activated by calmodulin. In terms of biological role, this magnesium-dependent enzyme catalyzes the hydrolysis of ATP coupled with the translocation of calcium from the cytosol out of the cell or into organelles. The polypeptide is Putative calcium-transporting ATPase 11, plasma membrane-type (ACA11) (Arabidopsis thaliana (Mouse-ear cress)).